The primary structure comprises 481 residues: Glutamate--tRNA ligase (481 aa).

The 'HIGH' region motif lies at 11 to 21 (PSPTGLLHIGN). The short motif at 255–259 (KLSKR) is the 'KMSKS' region element. Lys-258 contacts ATP.

Belongs to the class-I aminoacyl-tRNA synthetase family. Glutamate--tRNA ligase type 1 subfamily. In terms of assembly, monomer.

The protein resides in the cytoplasm. It carries out the reaction tRNA(Glu) + L-glutamate + ATP = L-glutamyl-tRNA(Glu) + AMP + diphosphate. Functionally, catalyzes the attachment of glutamate to tRNA(Glu) in a two-step reaction: glutamate is first activated by ATP to form Glu-AMP and then transferred to the acceptor end of tRNA(Glu). The polypeptide is Glutamate--tRNA ligase (Streptococcus pyogenes serotype M6 (strain ATCC BAA-946 / MGAS10394)).